Reading from the N-terminus, the 228-residue chain is Pyridoxamine 5'-phosphate oxidase (228 aa).

A pyridoxal 5'-phosphate-binding site is contributed by 20–23 (QYDK). Lys-29 is covalently cross-linked (Glycyl lysine isopeptide (Lys-Gly) (interchain with G-Cter in ubiquitin)). 73–76 (RILL) is a binding site for FMN. Lys-78 is a pyridoxal 5'-phosphate binding site. FMN-binding positions include 88–89 (YS), 95–96 (RK), and Gln-118. Positions 136, 140, and 144 each coordinate pyridoxal 5'-phosphate. FMN is bound by residues 153 to 154 (QS) and Trp-199. 205-207 (RLH) serves as a coordination point for pyridoxal 5'-phosphate. Arg-209 contributes to the FMN binding site.

Belongs to the pyridoxamine 5'-phosphate oxidase family. Homodimer. The cofactor is FMN.

It is found in the mitochondrion intermembrane space. It carries out the reaction pyridoxamine 5'-phosphate + O2 + H2O = pyridoxal 5'-phosphate + H2O2 + NH4(+). The enzyme catalyses pyridoxine 5'-phosphate + O2 = pyridoxal 5'-phosphate + H2O2. It functions in the pathway cofactor metabolism; pyridoxal 5'-phosphate salvage; pyridoxal 5'-phosphate from pyridoxamine 5'-phosphate: step 1/1. It participates in cofactor metabolism; pyridoxal 5'-phosphate salvage; pyridoxal 5'-phosphate from pyridoxine 5'-phosphate: step 1/1. In terms of biological role, catalyzes the oxidation of either pyridoxine 5'-phosphate (PNP) or pyridoxamine 5'-phosphate (PMP) into pyridoxal 5'-phosphate (PLP). The chain is Pyridoxamine 5'-phosphate oxidase (PDX3) from Saccharomyces cerevisiae (strain ATCC 204508 / S288c) (Baker's yeast).